Consider the following 168-residue polypeptide: Nicotinamide-nucleotide adenylyltransferase (168 aa).

Belongs to the archaeal NMN adenylyltransferase family.

The protein resides in the cytoplasm. The catalysed reaction is beta-nicotinamide D-ribonucleotide + ATP + H(+) = diphosphate + NAD(+). The protein operates within cofactor biosynthesis; NAD(+) biosynthesis; NAD(+) from nicotinamide D-ribonucleotide: step 1/1. This chain is Nicotinamide-nucleotide adenylyltransferase, found in Methanoculleus marisnigri (strain ATCC 35101 / DSM 1498 / JR1).